A 34-amino-acid polypeptide reads, in one-letter code: Corticostatin-6 (34 aa).

3 disulfides stabilise this stretch: cysteine 3–cysteine 31, cysteine 5–cysteine 20, and cysteine 10–cysteine 30.

Belongs to the alpha-defensin family. Lung, spleen, small intestine, pituitary gland, adrenal medulla and plasma.

Its subcellular location is the secreted. Its function is as follows. Microbicidal activity and inhibits corticotropin (ACTH) stimulated corticosterone production. The protein is Corticostatin-6 of Oryctolagus cuniculus (Rabbit).